Consider the following 488-residue polypeptide: Zinc finger protein 92 (488 aa).

In terms of domain architecture, KRAB spans 14 to 85 (VSFEDVSVYF…DDGMESAARS (72 aa)). 6 C2H2-type zinc fingers span residues 141–163 (YLCQ…RIIH), 169–191 (YECS…QRIH), 197–219 (YECG…QVIH), 225–247 (FVCR…TRIH), 253–275 (FECT…QRIH), and 281–303 (YICK…QLIH). The segment at 309–331 (FTCHEYGKAFRGLSGLSQHQRVH) adopts a C2H2-type 7; degenerate zinc-finger fold. A C2H2-type 8 zinc finger spans residues 337-359 (YECSECGRAFGRRANLFKHQVVH). The tract at residues 387–408 (QQPQEAGEGSSAEPQPIDTNEK) is disordered. The C2H2-type 9 zinc finger occupies 410–432 (QVCERCGQVFENKLLLCRHLRIH). Residues 435 to 488 (EDDKKQKPVISSTSVLEDKSLLSQHLEAQPTEESDSEGSVVFVYAEKPHGPSSP) form a disordered region.

Belongs to the krueppel C2H2-type zinc-finger protein family. Highly expressed in pancreatic islets.

It localises to the nucleus. Its function is as follows. KRAB domain-containing zinc-finger protein that represses B1/Alu SINE transposable elements and modulates the transcription of nearby genes in a tissue-specific manner. It regulates glucose homeostasis and lipid metabolism by modulating the expression of the endocrine cell-defining transcription factor, MAFB, in pancreatic islets and, the fat metabolism regulator, ACACB, in adipose tissue and muscle. The chain is Zinc finger protein 92 (Zfp92) from Mus musculus (Mouse).